A 753-amino-acid polypeptide reads, in one-letter code: Cell cycle progression protein 1 (753 aa).

The Cytoplasmic portion of the chain corresponds to 1-218 (MSESSSDSDS…KRHFSRGLNK (218 aa)). Residues 1–307 (MSESSSDSDS…QKKNLAAENQ (307 aa)) are interaction with MCF2L and SRC. The tract at residues 57-211 (HGGEESSANN…EPSKEPSKRH (155 aa)) is disordered. Composition is skewed to polar residues over residues 62 to 78 (SSANNTSSVGETMLSSM) and 122 to 138 (QEVTIQEAPSSDDLNMG). A compositionally biased stretch (basic residues) spans 176 to 185 (PRRRRNRKKT). Position 187 is a phosphoserine (Ser187). The span at 190–201 (ESEEPPLAEPED) shows a compositional bias: acidic residues. Residues 219–239 (CVILALVIAVSMGFGHFYGTI) traverse the membrane as a helical; Signal-anchor for type II membrane protein segment. The Lumenal portion of the chain corresponds to 240 to 753 (QIQKQLVRKT…YIKPCYYNSF (514 aa)). Residues 298–449 (QKKNLAAENQ…EQQRSDLWER (152 aa)) adopt a coiled-coil conformation. Over residues 457–467 (QHGKQETDGRK) the composition is skewed to basic and acidic residues. The disordered stretch occupies residues 457–484 (QHGKQETDGRKRGSRGSHRAKSKSKETF). Positions 468–478 (RGSRGSHRAKS) are enriched in basic residues. Positions 503–529 (VRHHKEKIKQAKEAVKENLKKFSDSVK) form a coiled coil. A compositionally biased stretch (basic and acidic residues) spans 553–563 (APKEAATEKTR). The tract at residues 553–606 (APKEAATEKTRTAYSYSSYSQQEAPNQNQNCRRPSAQRDGGREKPSHSEEIRKN) is disordered. Residues 573–584 (QQEAPNQNQNCR) are compositionally biased toward polar residues. A compositionally biased stretch (basic and acidic residues) spans 591 to 605 (DGGREKPSHSEEIRK).

Belongs to the CCPG1 family. Interacts with MCF2L. May interact with MCF2, ARHGEF1, BCR, VAV1 and FGD1, but not with TIAM1. Interacts with GTP-bound CDC42 and SRC.

Its subcellular location is the cytoplasmic granule membrane. Its function is as follows. Acts as an assembly platform for Rho protein signaling complexes. Limits guanine nucleotide exchange activity of MCF2L toward RHOA, which results in an inhibition of both its transcriptional activation ability and its transforming activity. Does not inhibit activity of MCF2L toward CDC42, or activity of MCF2 toward either RHOA or CDC42. May be involved in cell cycle regulation. This Mus musculus (Mouse) protein is Cell cycle progression protein 1 (Ccpg1).